The following is a 250-amino-acid chain: 2,3-bisphosphoglycerate-dependent phosphoglycerate mutase (250 aa).

Substrate-binding positions include 10 to 17, 23 to 24, Arg62, 89 to 92, Lys100, 116 to 117, and 185 to 186; these read RHGESQWN, TG, ERHY, RR, and GN. The active-site Tele-phosphohistidine intermediate is the His11. The Proton donor/acceptor role is filled by Glu89.

Belongs to the phosphoglycerate mutase family. BPG-dependent PGAM subfamily. Homodimer.

It carries out the reaction (2R)-2-phosphoglycerate = (2R)-3-phosphoglycerate. It functions in the pathway carbohydrate degradation; glycolysis; pyruvate from D-glyceraldehyde 3-phosphate: step 3/5. In terms of biological role, catalyzes the interconversion of 2-phosphoglycerate and 3-phosphoglycerate. This is 2,3-bisphosphoglycerate-dependent phosphoglycerate mutase from Yersinia enterocolitica serotype O:8 / biotype 1B (strain NCTC 13174 / 8081).